Here is a 356-residue protein sequence, read N- to C-terminus: Glucose 1-dehydrogenase (356 aa).

Residues 1 to 26 are disordered; that stretch reads MDAIVVSKADRTPRLVDRPRPDPTPG. Basic and acidic residues predominate over residues 8 to 21; sequence KADRTPRLVDRPRP. A Zn(2+)-binding site is contributed by D38. Substrate is bound at residue T40. Positions 63 and 64 each coordinate Zn(2+). The interval 86–107 is disordered; sequence TVRRPRGDPTPQFDRGQPDMAA. Positions 113 and 149 each coordinate substrate. Residue E149 coordinates Zn(2+). NADP(+)-binding positions include 180 to 183, 205 to 206, 270 to 272, and 300 to 302; these read NGSL, RR, LGV, and SVN. N302 lines the substrate pocket.

The protein belongs to the zinc-containing alcohol dehydrogenase family. Glucose 1-dehydrogenase subfamily. It depends on Zn(2+) as a cofactor.

It catalyses the reaction D-glucose + NAD(+) = D-glucono-1,5-lactone + NADH + H(+). The enzyme catalyses D-glucose + NADP(+) = D-glucono-1,5-lactone + NADPH + H(+). Functionally, catalyzes the NAD(P)(+)-dependent oxidation of D-glucose to D-gluconate via gluconolactone. Can utilize both NAD(+) and NADP(+) as electron acceptor. Is involved in the degradation of glucose through a modified Entner-Doudoroff pathway. In Halobacterium salinarum (strain ATCC 700922 / JCM 11081 / NRC-1) (Halobacterium halobium), this protein is Glucose 1-dehydrogenase.